The sequence spans 340 residues: Glyceraldehyde-3-phosphate dehydrogenase (340 aa).

Residues 11–12 and glycine 111 each bind NAD(+); that span reads SI. 140 to 142 contributes to the D-glyceraldehyde 3-phosphate binding site; it reads SCN. Cysteine 141 serves as the catalytic Nucleophile. Residue arginine 169 coordinates NAD(+). Residue 195–196 coordinates D-glyceraldehyde 3-phosphate; it reads HG. Position 303 (glutamine 303) interacts with NAD(+).

This sequence belongs to the glyceraldehyde-3-phosphate dehydrogenase family. In terms of assembly, homotetramer.

Its subcellular location is the cytoplasm. It catalyses the reaction D-glyceraldehyde 3-phosphate + phosphate + NADP(+) = (2R)-3-phospho-glyceroyl phosphate + NADPH + H(+). The enzyme catalyses D-glyceraldehyde 3-phosphate + phosphate + NAD(+) = (2R)-3-phospho-glyceroyl phosphate + NADH + H(+). Its pathway is carbohydrate degradation; glycolysis; pyruvate from D-glyceraldehyde 3-phosphate: step 1/5. This is Glyceraldehyde-3-phosphate dehydrogenase from Methanococcus maripaludis (strain C7 / ATCC BAA-1331).